Here is a 298-residue protein sequence, read N- to C-terminus: Acidic endochitinase (298 aa).

An N-terminal signal peptide occupies residues 1–29; the sequence is MKPNMACLKQVSALLLPLLFISFFKPSHA. The region spanning 30–298 is the GH18 domain; it reads GGISVYWGQN…GYSGAIIGSV (269 aa). 2 disulfide bridges follow: cysteine 49–cysteine 96 and cysteine 79–cysteine 86. The active-site Proton donor is glutamate 156. A disulfide bond links cysteine 185 and cysteine 214.

It belongs to the glycosyl hydrolase 18 family. Chitinase class II subfamily.

Its subcellular location is the secreted. The protein localises to the extracellular space. It catalyses the reaction Random endo-hydrolysis of N-acetyl-beta-D-glucosaminide (1-&gt;4)-beta-linkages in chitin and chitodextrins.. Its function is as follows. This protein functions as a defense against chitin containing fungal pathogens. This is Acidic endochitinase from Phaseolus angularis (Azuki bean).